The sequence spans 520 residues: Ribonuclease Y (520 aa).

A helical transmembrane segment spans residues 4–24 (TMFTIISILLSLICLVVGYFV). One can recognise a KH domain in the interval 210-273 (TVSVVNLPND…ETARIALDKL (64 aa)). One can recognise an HD domain in the interval 336 to 429 (VLKHSIEVAH…VAAADALSAA (94 aa)).

It belongs to the RNase Y family.

The protein resides in the cell membrane. Its function is as follows. Endoribonuclease that initiates mRNA decay. The polypeptide is Ribonuclease Y (Bacillus pumilus (strain SAFR-032)).